Reading from the N-terminus, the 383-residue chain is Homoserine O-acetyltransferase (383 aa).

The 311-residue stretch at 52-362 folds into the AB hydrolase-1 domain; the sequence is NAILVCHALT…PWGHDAFLLD (311 aa). Catalysis depends on serine 158, which acts as the Nucleophile. Arginine 227 is a binding site for substrate. Catalysis depends on residues aspartate 323 and histidine 356. Aspartate 357 contacts substrate.

The protein belongs to the AB hydrolase superfamily. MetX family. In terms of assembly, homodimer.

The protein resides in the cytoplasm. It catalyses the reaction L-homoserine + acetyl-CoA = O-acetyl-L-homoserine + CoA. The protein operates within amino-acid biosynthesis; L-methionine biosynthesis via de novo pathway; O-acetyl-L-homoserine from L-homoserine: step 1/1. Functionally, transfers an acetyl group from acetyl-CoA to L-homoserine, forming acetyl-L-homoserine. The chain is Homoserine O-acetyltransferase from Symbiobacterium thermophilum (strain DSM 24528 / JCM 14929 / IAM 14863 / T).